The primary structure comprises 262 residues: Hydroxyethylthiazole kinase (262 aa).

Substrate is bound at residue methionine 50. Residues arginine 125 and threonine 171 each coordinate ATP. Glycine 198 lines the substrate pocket.

It belongs to the Thz kinase family. Mg(2+) serves as cofactor.

The catalysed reaction is 5-(2-hydroxyethyl)-4-methylthiazole + ATP = 4-methyl-5-(2-phosphooxyethyl)-thiazole + ADP + H(+). It participates in cofactor biosynthesis; thiamine diphosphate biosynthesis; 4-methyl-5-(2-phosphoethyl)-thiazole from 5-(2-hydroxyethyl)-4-methylthiazole: step 1/1. Functionally, catalyzes the phosphorylation of the hydroxyl group of 4-methyl-5-beta-hydroxyethylthiazole (THZ). The sequence is that of Hydroxyethylthiazole kinase from Escherichia fergusonii (strain ATCC 35469 / DSM 13698 / CCUG 18766 / IAM 14443 / JCM 21226 / LMG 7866 / NBRC 102419 / NCTC 12128 / CDC 0568-73).